The chain runs to 240 residues: ATP-dependent Clp protease proteolytic subunit 2 (240 aa).

Catalysis depends on Ser132, which acts as the Nucleophile. Residue His157 is part of the active site.

Belongs to the peptidase S14 family. In terms of assembly, fourteen ClpP subunits assemble into 2 heptameric rings which stack back to back to give a disk-like structure with a central cavity, resembling the structure of eukaryotic proteasomes.

The protein localises to the cytoplasm. It catalyses the reaction Hydrolysis of proteins to small peptides in the presence of ATP and magnesium. alpha-casein is the usual test substrate. In the absence of ATP, only oligopeptides shorter than five residues are hydrolyzed (such as succinyl-Leu-Tyr-|-NHMec, and Leu-Tyr-Leu-|-Tyr-Trp, in which cleavage of the -Tyr-|-Leu- and -Tyr-|-Trp bonds also occurs).. Its function is as follows. Cleaves peptides in various proteins in a process that requires ATP hydrolysis. Has a chymotrypsin-like activity. Plays a major role in the degradation of misfolded proteins. The sequence is that of ATP-dependent Clp protease proteolytic subunit 2 from Synechococcus elongatus (strain ATCC 33912 / PCC 7942 / FACHB-805) (Anacystis nidulans R2).